Reading from the N-terminus, the 812-residue chain is MQPRRESGGLIARFAPDIRLKSAVACLFNRASLVLARRVGDGCLHPRSPPRDRTAMADNSNSSPPASRRREKPQLSCTLCRRRKLRCDRRQPCETCVRRGLSLSCTYVRPPGAAPERIDRAQGRPAGVENLPERIGQLERLITTLMDTVQAGKTPSAREPMPADSTAAGFERAAAAAAAAAAAAAAPGEAVDAADSAAKEEEEEAAPQLSDRFGRIKIEKMETAYVESTHWTAILDGIAELRDHFRDEQNAVGSAPFPGPGAAAEPAEPDEPDILFGNYRCVSKDEILSAMLPRPLVDRLVTEYFINKDIAPVIVHSVTFLREYERFWEHPRETPIMWIGLLFGVMCLGAAFQRQRSSQMPDPQQLVRLYREKIIQCLVVGKYAKCAPYTLETLLLYLNIEYLQSEDTRVETWILLGVIVRLALRMGYHRDASHFPHISPFAAEMRRRVWALIVQFDCLTSAQVGLPRMIRDSQSDTAEPRNLLDEDFDENSTALPLPQPSTVQTPVQYIVAKNRIVAVFGRICDLITSSNAPSYPEVMQLDETLHDTYRSVPGGLQMRPMTRSLTDGATVILRRMYIVLLYHKAVCMLHHRYMIPARTDGRYAYSRSTCVAAALQILSHQWTLHNETQPGGRLYEERWKVSSLVKSTFFLGTTILCAELDCSLHKEPADAEQSPAETGLRQQVIQALHNSYTVWLQASDSSREARLAADVSGLLLTRAQRKWRPAEMRQVGNMAMSSESPFMGVSIPPQSATMASAAPVEQPLSMPQLLQFNTAAHIDYSDLGAEPLGLSQGVDDMLAMSMTFPRMFNVPV.

A disordered region spans residues G42–Q74. Positions C77–C105 form a DNA-binding region, zn(2)-C6 fungal-type.

It is found in the nucleus. Its function is as follows. Zn(2)-C6 fungal-type transcription factor; part of the gene cluster that mediates the biosynthesis of azaphilone pigments (MonAzPs), a complex mixture of compounds with a common azaphilone skeleton very widely used as food colorants. Acts probably as a negative regulator of the azaphilone pigments (MonAzPs) gene cluster. The chain is Zn(2)-C6 fungal-type transcription factor pigI from Monascus ruber (Mold).